A 385-amino-acid polypeptide reads, in one-letter code: Lipid-A-disaccharide synthase 2 (385 aa).

It belongs to the LpxB family.

It carries out the reaction a lipid X + a UDP-2-N,3-O-bis[(3R)-3-hydroxyacyl]-alpha-D-glucosamine = a lipid A disaccharide + UDP + H(+). Its pathway is bacterial outer membrane biogenesis; LPS lipid A biosynthesis. Condensation of UDP-2,3-diacylglucosamine and 2,3-diacylglucosamine-1-phosphate to form lipid A disaccharide, a precursor of lipid A, a phosphorylated glycolipid that anchors the lipopolysaccharide to the outer membrane of the cell. The polypeptide is Lipid-A-disaccharide synthase 2 (Legionella pneumophila (strain Paris)).